The sequence spans 95 residues: uncharacterized protein (95 aa).

This is an uncharacterized protein from Bacillus anthracis.